A 179-amino-acid chain; its full sequence is Isopentenyl-diphosphate Delta-isomerase (179 aa).

2 residues coordinate Mn(2+): histidine 25 and histidine 31. Residues 29–161 (ELHRAITVYI…PEQFTAWFQL (133 aa)) enclose the Nudix hydrolase domain. The active site involves cysteine 66. A Mg(2+)-binding site is contributed by cysteine 66. Histidine 68 contributes to the Mn(2+) binding site. Glutamate 86 is a Mg(2+) binding site. Mn(2+) is bound by residues glutamate 111 and glutamate 113. Glutamate 113 is an active-site residue.

The protein belongs to the IPP isomerase type 1 family. In terms of assembly, homodimer. Requires Mg(2+) as cofactor. It depends on Mn(2+) as a cofactor.

It localises to the cytoplasm. The enzyme catalyses isopentenyl diphosphate = dimethylallyl diphosphate. Its pathway is isoprenoid biosynthesis; dimethylallyl diphosphate biosynthesis; dimethylallyl diphosphate from isopentenyl diphosphate: step 1/1. Catalyzes the 1,3-allylic rearrangement of the homoallylic substrate isopentenyl (IPP) to its highly electrophilic allylic isomer, dimethylallyl diphosphate (DMAPP). This Pectobacterium atrosepticum (strain SCRI 1043 / ATCC BAA-672) (Erwinia carotovora subsp. atroseptica) protein is Isopentenyl-diphosphate Delta-isomerase.